The following is a 199-amino-acid chain: Neurotrophic factor BDNF precursor form (199 aa).

The disordered stretch occupies residues 1–23 (GQGSLAYPGLRTQGNLETLSGPN). Positions 1 to 100 (GQGSLAYPGL…AANMSMRVRR (100 aa)) are excised as a propeptide. A compositionally biased stretch (polar residues) spans 12-23 (TQGNLETLSGPN). N93 is a glycosylation site (N-linked (GlcNAc...) asparagine). C113 and C180 are disulfide-bonded.

It belongs to the NGF-beta family.

It localises to the secreted. Its function is as follows. Promotes the survival of neuronal populations that are all located either in the central nervous system or directly connected to it. This Morelia spilota (Carpet python) protein is Neurotrophic factor BDNF precursor form (BDNF).